The following is a 636-amino-acid chain: 1-deoxy-D-xylulose-5-phosphate synthase (636 aa).

Thiamine diphosphate is bound by residues histidine 74 and 115-117 (AHS). Aspartate 146 contacts Mg(2+). Thiamine diphosphate-binding positions include 147 to 148 (GS), asparagine 176, tyrosine 287, and glutamate 369. Asparagine 176 contacts Mg(2+).

This sequence belongs to the transketolase family. DXPS subfamily. As to quaternary structure, homodimer. Requires Mg(2+) as cofactor. The cofactor is thiamine diphosphate.

It carries out the reaction D-glyceraldehyde 3-phosphate + pyruvate + H(+) = 1-deoxy-D-xylulose 5-phosphate + CO2. The protein operates within metabolic intermediate biosynthesis; 1-deoxy-D-xylulose 5-phosphate biosynthesis; 1-deoxy-D-xylulose 5-phosphate from D-glyceraldehyde 3-phosphate and pyruvate: step 1/1. Its function is as follows. Catalyzes the acyloin condensation reaction between C atoms 2 and 3 of pyruvate and glyceraldehyde 3-phosphate to yield 1-deoxy-D-xylulose-5-phosphate (DXP). The polypeptide is 1-deoxy-D-xylulose-5-phosphate synthase (Polaromonas naphthalenivorans (strain CJ2)).